Consider the following 145-residue polypeptide: Superoxide dismutase [Mn/Fe] (145 aa).

Residues His-10 and His-64 each coordinate Fe(3+). Mn(2+) is bound by residues His-10 and His-64. Positions 126-145 are disordered; that stretch reads TSTANQDTPISEGKKPILGL.

It belongs to the iron/manganese superoxide dismutase family. Mn(2+) serves as cofactor. Requires Fe(3+) as cofactor.

The enzyme catalyses 2 superoxide + 2 H(+) = H2O2 + O2. Functionally, destroys superoxide anion radicals which are normally produced within the cells and which are toxic to biological systems. Catalyzes the dismutation of superoxide anion radicals into O2 and H2O2 by successive reduction and oxidation of the transition metal ion at the active site. This is Superoxide dismutase [Mn/Fe] (sodA) from Streptococcus mitis.